A 787-amino-acid polypeptide reads, in one-letter code: Integrin beta-6 (787 aa).

The signal sequence occupies residues 1 to 21 (MGIELVCLFLLLLGRNDHVQG). In terms of domain architecture, PSI spans 22–71 (GCAWSGAETCSDCLLTGPHCAWCSQENFTHLSGAGERCDTPENLLAKGCQ). Over 22 to 708 (GCAWSGAETC…KDCPKPPNIP (687 aa)) the chain is Extracellular. 19 disulfides stabilise this stretch: Cys23–Cys41, Cys31–Cys454, Cys34–Cys59, Cys44–Cys70, Cys197–Cys204, Cys252–Cys293, Cys394–Cys406, Cys426–Cys452, Cys456–Cys476, Cys467–Cys479, Cys481–Cys490, Cys492–Cys519, Cys502–Cys517, Cys511–Cys522, Cys524–Cys537, Cys539–Cys560, Cys544–Cys558, Cys552–Cys563, and Cys565–Cys574. N-linked (GlcNAc...) asparagine glycans are attached at residues Asn48 and Asn97. In terms of domain architecture, VWFA spans 131 to 371 (YPVDLYYLMD…QLIISAYEEL (241 aa)). Mg(2+) is bound by residues Asp140, Ser142, and Ser144. The Ca(2+) site is built by Ser144, Asp147, Asp148, and Glu179. Residues Asn235, Asp237, Pro239, and Glu240 each coordinate Ca(2+). Glu240 provides a ligand contact to Mg(2+). An N-linked (GlcNAc...) asparagine glycan is attached at Asn260. Ca(2+) contacts are provided by Asp271 and Lys355. An N-linked (GlcNAc...) asparagine glycan is attached at Asn387. N-linked (GlcNAc...) asparagine glycosylation occurs at Asn418. 4 consecutive I-EGF domains span residues 456–491 (CQRE…PRCE), 492–538 (CGED…PYCQ), 539–575 (CDNF…EYCN), and 576–615 (CTTS…PTCE). N-linked (GlcNAc...) asparagine glycans are attached at residues Asn463 and Asn471. Asn541 is a glycosylation site (N-linked (GlcNAc...) asparagine). Asn575 is a glycosylation site (N-linked (GlcNAc...) asparagine). Intrachain disulfides connect Cys576/Cys599, Cys583/Cys597, Cys591/Cys602, Cys604/Cys614, Cys617/Cys620, Cys624/Cys669, Cys630/Cys649, Cys633/Cys645, and Cys677/Cys701. Asn695 carries N-linked (GlcNAc...) asparagine glycosylation. A helical transmembrane segment spans residues 709–729 (MIMLGVSLAILLIGVVLLCIW). The interval 730-757 (KLLVSFHDRKEVAKFEAERSKAKWQTGT) is interaction with HAX1. Topologically, residues 730–787 (KLLVSFHDRKEVAKFEAERSKAKWQTGTNPLYRGSTSTFKNVTYKHREKHKVGLSSDG) are cytoplasmic.

The protein belongs to the integrin beta chain family. In terms of assembly, heterodimer of an alpha and a beta subunit. Interacts with FLNB. Interacts with HAX1. ITGAV:ITGB6 interacts with FBN1. ITGAV:ITGB6 interacts with TGFB1.

The protein localises to the cell membrane. The protein resides in the cell junction. It is found in the focal adhesion. In terms of biological role, integrin alpha-V:beta-6 (ITGAV:ITGB6) is a receptor for fibronectin and cytotactin. It recognizes the sequence R-G-D in its ligands. ITGAV:ITGB6 acts as a receptor for fibrillin-1 (FBN1) and mediates R-G-D-dependent cell adhesion to FBN1. Integrin alpha-V:beta-6 (ITGAV:ITGB6) mediates R-G-D-dependent release of transforming growth factor beta-1 (TGF-beta-1) from regulatory Latency-associated peptide (LAP), thereby playing a key role in TGF-beta-1 activation. This Rattus norvegicus (Rat) protein is Integrin beta-6 (Itgb6).